A 680-amino-acid chain; its full sequence is DNA ligase (680 aa).

NAD(+) is bound by residues Asp-35 to Asp-39, Ser-86 to Leu-87, and Glu-111. Lys-113 acts as the N6-AMP-lysine intermediate in catalysis. 4 residues coordinate NAD(+): Arg-134, Glu-174, Lys-290, and Lys-314. Zn(2+) is bound by residues Cys-408, Cys-411, Cys-427, and Cys-433. The 84-residue stretch at Val-597–Glu-680 folds into the BRCT domain.

Belongs to the NAD-dependent DNA ligase family. LigA subfamily. The cofactor is Mg(2+). Requires Mn(2+) as cofactor.

The catalysed reaction is NAD(+) + (deoxyribonucleotide)n-3'-hydroxyl + 5'-phospho-(deoxyribonucleotide)m = (deoxyribonucleotide)n+m + AMP + beta-nicotinamide D-nucleotide.. In terms of biological role, DNA ligase that catalyzes the formation of phosphodiester linkages between 5'-phosphoryl and 3'-hydroxyl groups in double-stranded DNA using NAD as a coenzyme and as the energy source for the reaction. It is essential for DNA replication and repair of damaged DNA. The protein is DNA ligase of Corynebacterium glutamicum (strain R).